We begin with the raw amino-acid sequence, 654 residues long: Chaperone protein DnaK (654 aa).

Residue T205 is modified to Phosphothreonine; by autocatalysis. The tract at residues 592-654 is disordered; it reads ELERQMQQIG…EVEILDDKKP (63 aa). A compositionally biased stretch (polar residues) spans 608 to 621; sequence AGQSETQSTGPGSY. A compositionally biased stretch (low complexity) spans 622 to 636; sequence QESSNQSSQHQTNNN.

This sequence belongs to the heat shock protein 70 family.

Acts as a chaperone. This Protochlamydia amoebophila (strain UWE25) protein is Chaperone protein DnaK.